The primary structure comprises 430 residues: MISVYSISLGCPKNRVDTEHLLGSLGVAVQPVEHLSRADVVLINTCGFILPAVEESVRTIVETIDDLSGLRKRPLLAVAGCLVGRYGAKELASELPEVDVWLPNQDITAWPAMLAHALKLEGAVTPGRLLSTGPSYAWLKISDGCRHNCSFCTIPSIRGGHRSTPADVLEREARDLVAQGVRELVLVAQDVTAWGEDIGAPHGLATLLERLLPVPGLARLRLMYLYPAGLTRELLGFMRDAGAPLVPYFDVPLQHAHPDILSRMGRPFARDPRRVVERVRDFFPDAALRTSLIVGFPGETDEHYAALTSFVEETRFTHMGVFAYRAEEGTPAAEMPEQVEDRVKEWRRDALMEVQAEISEELLAVHEGTRQQVLVDAPHEEWPGLHTGRTWFQAPEIDGITYVSGPGVEPGALVEADIVETRTYDLVALV.

The region spanning 2 to 119 (ISVYSISLGC…WPAMLAHALK (118 aa)) is the MTTase N-terminal domain. Positions 11, 46, 81, 145, 149, and 152 each coordinate [4Fe-4S] cluster. A Radical SAM core domain is found at 131-361 (STGPSYAWLK…MEVQAEISEE (231 aa)). Residues 364-430 (AVHEGTRQQV…TRTYDLVALV (67 aa)) enclose the TRAM domain.

It belongs to the methylthiotransferase family. RimO subfamily. [4Fe-4S] cluster is required as a cofactor.

It localises to the cytoplasm. The catalysed reaction is L-aspartate(89)-[ribosomal protein uS12]-hydrogen + (sulfur carrier)-SH + AH2 + 2 S-adenosyl-L-methionine = 3-methylsulfanyl-L-aspartate(89)-[ribosomal protein uS12]-hydrogen + (sulfur carrier)-H + 5'-deoxyadenosine + L-methionine + A + S-adenosyl-L-homocysteine + 2 H(+). Its function is as follows. Catalyzes the methylthiolation of an aspartic acid residue of ribosomal protein uS12. This is Ribosomal protein uS12 methylthiotransferase RimO from Nitratidesulfovibrio vulgaris (strain DP4) (Desulfovibrio vulgaris).